The sequence spans 430 residues: Adenylosuccinate synthetase (430 aa).

GTP is bound by residues 12–18 (GDEGKGK) and 40–42 (GHT). Residue aspartate 13 is the Proton acceptor of the active site. Residues aspartate 13 and glycine 40 each coordinate Mg(2+). IMP is bound by residues 13-16 (DEGK), 38-41 (NAGH), threonine 130, arginine 144, glutamine 224, threonine 239, and arginine 303. Histidine 41 functions as the Proton donor in the catalytic mechanism. A substrate-binding site is contributed by 299-305 (TVTSRKR). GTP-binding positions include arginine 305, 331 to 333 (KLD), and 413 to 415 (STS).

The protein belongs to the adenylosuccinate synthetase family. Homodimer. Requires Mg(2+) as cofactor.

The protein localises to the cytoplasm. It catalyses the reaction IMP + L-aspartate + GTP = N(6)-(1,2-dicarboxyethyl)-AMP + GDP + phosphate + 2 H(+). It functions in the pathway purine metabolism; AMP biosynthesis via de novo pathway; AMP from IMP: step 1/2. Functionally, plays an important role in the de novo pathway of purine nucleotide biosynthesis. Catalyzes the first committed step in the biosynthesis of AMP from IMP. The protein is Adenylosuccinate synthetase of Pelagibacter ubique (strain HTCC1062).